Here is a 476-residue protein sequence, read N- to C-terminus: Protein transport protein Sec61 subunit alpha isoform 1 (476 aa).

Residues 1 to 33 lie on the Cytoplasmic side of the membrane; sequence MGIKFLEVIKPFCVILPEIQKPERKIQFKEKVL. The helical transmembrane segment at 34 to 53 threads the bilayer; sequence WTAITLFIFLVCCQIPLFGI. Over 54–76 the chain is Lumenal; the sequence is MSSDSADPFYWMRVILASNRGTL. Residues 77–96 form a helical membrane-spanning segment; it reads MELGISPIVTSGLIMQLLAG. At 97 to 117 the chain is on the cytoplasmic side; it reads AKIIEVGDTPKDRALFNGAQK. A helical transmembrane segment spans residues 118-138; sequence LFGMTITIGQSIVYVMTGMYG. Over 139–144 the chain is Lumenal; sequence DPSEMG. A helical membrane pass occupies residues 145-165; it reads AGVCLLITIQLFVAGLIVLLL. At 166–172 the chain is on the cytoplasmic side; sequence DELLQKG. The helical transmembrane segment at 173–193 threads the bilayer; it reads YGLGSGISLFIATNICETIVW. Residues 194 to 240 lie on the Lumenal side of the membrane; sequence KAFSPTTVNTGRGMEFEGAIIALFHLLATRTDKVRALREAFYRQNLP. The chain crosses the membrane as a helical span at residues 241-261; it reads NLMNLIATIFVFAVVIYFQGF. Residues 262 to 288 are Cytoplasmic-facing; the sequence is RVDLPIKSARYRGQYNTYPIKLFYTSN. The chain crosses the membrane as a helical span at residues 289–309; that stretch reads IPIILQSALVSNLYVISQMLS. At 310-354 the chain is on the lumenal side; sequence ARFSGNLLVSLLGTWSDTSSGGPARAYPVGGLCYYLSPPESFGSV. Residues 355 to 375 traverse the membrane as a helical segment; the sequence is LEDPVHAVVYIVFMLGSCAFF. Residues 376–420 are Cytoplasmic-facing; the sequence is SKTWIEVSGSSAKDVAKQLKEQQMVMRGHRETSMVHELNRYIPTA. A helical membrane pass occupies residues 421-441; it reads AAFGGLCIGALSVLADFLGAI. Residues 442–445 lie on the Lumenal side of the membrane; that stretch reads GSGT. The helical transmembrane segment at 446 to 462 threads the bilayer; sequence GILLAVTIIYQYFEIFV. Residues 463–476 lie on the Cytoplasmic side of the membrane; sequence KEQSEVGSMGALLF.

This sequence belongs to the SecY/SEC61-alpha family. In terms of assembly, the SEC61 channel-forming translocon complex consists of channel-forming core components SEC61A1, SEC61B and SEC61G and different auxiliary components such as SEC62 and SEC63. The SEC61 channel associates with the multi-pass translocon (MPT) complex.

It localises to the endoplasmic reticulum membrane. In terms of biological role, component of SEC61 channel-forming translocon complex that mediates transport of signal peptide-containing precursor polypeptides across the endoplasmic reticulum (ER). Forms a ribosome receptor and a gated pore in the ER membrane, both functions required for cotranslational translocation of nascent polypeptides. May cooperate with auxiliary protein SEC62, SEC63 and HSPA5/BiP to enable post-translational transport of small presecretory proteins. The SEC61 channel is also involved in ER membrane insertion of transmembrane proteins: it mediates membrane insertion of the first few transmembrane segments of proteins, while insertion of subsequent transmembrane regions of multi-pass membrane proteins is mediated by the multi-pass translocon (MPT) complex. The SEC61 channel cooperates with the translocating protein TRAM1 to import nascent proteins into the ER. Controls the passive efflux of calcium ions from the ER lumen to the cytosol through SEC61 channel, contributing to the maintenance of cellular calcium homeostasis. Plays a critical role in nephrogenesis, specifically at pronephros stage. The chain is Protein transport protein Sec61 subunit alpha isoform 1 (SEC61A1) from Bos taurus (Bovine).